The chain runs to 270 residues: Release factor glutamine methyltransferase (270 aa).

Residues Gly113–Gly117, Asp136, and Asn177 contribute to the S-adenosyl-L-methionine site. Asn177–Tyr180 contributes to the substrate binding site.

The protein belongs to the protein N5-glutamine methyltransferase family. PrmC subfamily.

The enzyme catalyses L-glutaminyl-[peptide chain release factor] + S-adenosyl-L-methionine = N(5)-methyl-L-glutaminyl-[peptide chain release factor] + S-adenosyl-L-homocysteine + H(+). Functionally, methylates the class 1 translation termination release factors RF1/PrfA and RF2/PrfB on the glutamine residue of the universally conserved GGQ motif. The chain is Release factor glutamine methyltransferase from Lactococcus lactis subsp. lactis (strain IL1403) (Streptococcus lactis).